Here is a 280-residue protein sequence, read N- to C-terminus: Mitochondrial outer membrane protein porin 2 (280 aa).

The protein belongs to the eukaryotic mitochondrial porin (TC 1.B.8.1) family. Expressed in roots, stems, leaves, palea, lemma and pollen.

The protein localises to the mitochondrion outer membrane. Its function is as follows. Forms a channel through the mitochondrial outer membrane that allows diffusion of small hydrophilic molecules. The channel adopts an open conformation at low or zero membrane potential and a closed conformation at potentials above 30-40 mV. The open state has a weak anion selectivity whereas the closed state is cation-selective. This chain is Mitochondrial outer membrane protein porin 2 (VDAC2), found in Oryza sativa subsp. japonica (Rice).